The chain runs to 90 residues: Putative regulatory protein NT01CX_2250 (90 aa).

It belongs to the RemA family.

The chain is Putative regulatory protein NT01CX_2250 from Clostridium novyi (strain NT).